Consider the following 215-residue polypeptide: Probable transaldolase (215 aa).

The active-site Schiff-base intermediate with substrate is lysine 83.

The protein belongs to the transaldolase family. Type 3B subfamily.

It localises to the cytoplasm. It carries out the reaction D-sedoheptulose 7-phosphate + D-glyceraldehyde 3-phosphate = D-erythrose 4-phosphate + beta-D-fructose 6-phosphate. The protein operates within carbohydrate degradation; pentose phosphate pathway; D-glyceraldehyde 3-phosphate and beta-D-fructose 6-phosphate from D-ribose 5-phosphate and D-xylulose 5-phosphate (non-oxidative stage): step 2/3. In terms of biological role, transaldolase is important for the balance of metabolites in the pentose-phosphate pathway. In Heliobacterium modesticaldum (strain ATCC 51547 / Ice1), this protein is Probable transaldolase.